Here is a 293-residue protein sequence, read N- to C-terminus: uncharacterized protein (293 aa).

The HTH lysR-type domain maps to 1 to 58 (MDLRRFITLKTVVEEGSFLRASQKLCCTQSTVTFHIQQLEQEFSVQLFEKIGRRMCLT). The H-T-H motif DNA-binding region spans 18 to 37 (FLRASQKLCCTQSTVTFHIQ).

It belongs to the LysR transcriptional regulatory family.

This is an uncharacterized protein from Escherichia coli (strain K12).